The sequence spans 195 residues: HTH-type transcriptional regulator TtmR (195 aa).

In terms of domain architecture, HTH marR-type spans 47 to 177; it reads DSQLCFAVYA…LLDNLASMRD (131 aa). The segment at residues 93 to 116 is a DNA-binding region (H-T-H motif); sequence VKEIGSRLFLDSGTLTPLLKRLEA.

It localises to the cytoplasm. Functionally, formaldehyde-responsive transcription factor that modulates resistance to stress induced by formaldehyde. Impacts the expression of a number of genes encoding transcription factors and/or involved in stress response, including efgA, and which probably collectively trigger a formaldehyde-specific physiological response. Required for optimal transition to methylotrophy. Not involved in a general stress response. This is HTH-type transcriptional regulator TtmR from Methylorubrum extorquens (strain PA1) (Methylobacterium extorquens).